The sequence spans 249 residues: Ribonuclease 3 (249 aa).

The RNase III domain maps to 21–149; it reads VDHQPLIDAL…LLGAIYLAHG (129 aa). Residue glutamate 62 participates in Mg(2+) binding. The active site involves aspartate 66. Mg(2+) contacts are provided by aspartate 135 and glutamate 138. Residue glutamate 138 is part of the active site. The DRBM domain occupies 176-244; sequence DWKTTLQERL…AHKAVGFLQD (69 aa).

It belongs to the ribonuclease III family. Homodimer. The cofactor is Mg(2+).

It is found in the cytoplasm. It carries out the reaction Endonucleolytic cleavage to 5'-phosphomonoester.. Its function is as follows. Digests double-stranded RNA. Involved in the processing of primary rRNA transcript to yield the immediate precursors to the large and small rRNAs (23S and 16S). Processes some mRNAs, and tRNAs when they are encoded in the rRNA operon. Processes pre-crRNA and tracrRNA of type II CRISPR loci if present in the organism. This chain is Ribonuclease 3, found in Corynebacterium diphtheriae (strain ATCC 700971 / NCTC 13129 / Biotype gravis).